The sequence spans 478 residues: Protein nucleotidyltransferase YdiU (478 aa).

Residues G84, G86, R87, K107, D119, G120, R170, and R177 each coordinate ATP. D246 (proton acceptor) is an active-site residue. Mg(2+) contacts are provided by N247 and D256. D256 is a binding site for ATP.

Belongs to the SELO family. Mg(2+) is required as a cofactor. It depends on Mn(2+) as a cofactor.

It catalyses the reaction L-seryl-[protein] + ATP = 3-O-(5'-adenylyl)-L-seryl-[protein] + diphosphate. The catalysed reaction is L-threonyl-[protein] + ATP = 3-O-(5'-adenylyl)-L-threonyl-[protein] + diphosphate. It carries out the reaction L-tyrosyl-[protein] + ATP = O-(5'-adenylyl)-L-tyrosyl-[protein] + diphosphate. The enzyme catalyses L-histidyl-[protein] + UTP = N(tele)-(5'-uridylyl)-L-histidyl-[protein] + diphosphate. It catalyses the reaction L-seryl-[protein] + UTP = O-(5'-uridylyl)-L-seryl-[protein] + diphosphate. The catalysed reaction is L-tyrosyl-[protein] + UTP = O-(5'-uridylyl)-L-tyrosyl-[protein] + diphosphate. Functionally, nucleotidyltransferase involved in the post-translational modification of proteins. It can catalyze the addition of adenosine monophosphate (AMP) or uridine monophosphate (UMP) to a protein, resulting in modifications known as AMPylation and UMPylation. The polypeptide is Protein nucleotidyltransferase YdiU (Escherichia coli O6:K15:H31 (strain 536 / UPEC)).